The sequence spans 326 residues: Putative HTH-type transcriptional regulatory protein MmarC5_0898 (326 aa).

The HTH cro/C1-type domain maps to 128–183; sequence LRETREKLKISVGELAEISRVSRKTIYKYEQNEANPSAEVAIKIEEYLDVPLIKGI. A DNA-binding region (H-T-H motif) is located at residues 139-158; it reads VGELAEISRVSRKTIYKYEQ.

The chain is Putative HTH-type transcriptional regulatory protein MmarC5_0898 from Methanococcus maripaludis (strain C5 / ATCC BAA-1333).